Reading from the N-terminus, the 366-residue chain is Spore germination protein GerM (366 aa).

2 disordered regions span residues 42 to 72 and 346 to 366; these read TFVN…KADQ and EKGE…TGSF. Positions 58–69 are enriched in basic and acidic residues; the sequence is KKTESEKSDTAK. The segment covering 357–366 has biased composition (polar residues); the sequence is RPSQVNTGSF.

Unknown. Affects both sporulation and germination. In Bacillus subtilis (strain 168), this protein is Spore germination protein GerM (gerM).